Here is a 368-residue protein sequence, read N- to C-terminus: Nuclease EXOG, mitochondrial (368 aa).

Residues Met1–Arg41 constitute a mitochondrion transit peptide. His140 serves as the catalytic Proton acceptor. Asn171 is an a divalent metal cation binding site.

This sequence belongs to the DNA/RNA non-specific endonuclease family. As to quaternary structure, homodimer. The cofactor is a divalent metal cation.

It localises to the mitochondrion inner membrane. Its function is as follows. Endo/exonuclease with nicking activity towards supercoiled DNA, a preference for single-stranded DNA and 5'-3' exonuclease activity. In Mus musculus (Mouse), this protein is Nuclease EXOG, mitochondrial (Exog).